The sequence spans 71 residues: Small ribosomal subunit protein bS18 (71 aa).

It belongs to the bacterial ribosomal protein bS18 family. As to quaternary structure, part of the 30S ribosomal subunit. Forms a tight heterodimer with protein bS6.

Its function is as follows. Binds as a heterodimer with protein bS6 to the central domain of the 16S rRNA, where it helps stabilize the platform of the 30S subunit. In Synechocystis sp. (strain ATCC 27184 / PCC 6803 / Kazusa), this protein is Small ribosomal subunit protein bS18.